The following is a 122-amino-acid chain: Large ribosomal subunit protein uL14 (122 aa).

It belongs to the universal ribosomal protein uL14 family. As to quaternary structure, part of the 50S ribosomal subunit. Forms a cluster with proteins L3 and L19. In the 70S ribosome, L14 and L19 interact and together make contacts with the 16S rRNA in bridges B5 and B8.

Binds to 23S rRNA. Forms part of two intersubunit bridges in the 70S ribosome. The protein is Large ribosomal subunit protein uL14 of Chlorobium luteolum (strain DSM 273 / BCRC 81028 / 2530) (Pelodictyon luteolum).